The primary structure comprises 430 residues: UDP-N-acetylglucosamine 1-carboxyvinyltransferase 1 (430 aa).

Residue 22–23 (KN) participates in phosphoenolpyruvate binding. Arg-102 is a binding site for UDP-N-acetyl-alpha-D-glucosamine. Cys-126 acts as the Proton donor in catalysis. Cys-126 bears the 2-(S-cysteinyl)pyruvic acid O-phosphothioketal mark. Residues 131 to 135 (RPVDL), 172 to 175 (KVSV), Asp-317, and Ile-339 contribute to the UDP-N-acetyl-alpha-D-glucosamine site.

It belongs to the EPSP synthase family. MurA subfamily.

The protein localises to the cytoplasm. It carries out the reaction phosphoenolpyruvate + UDP-N-acetyl-alpha-D-glucosamine = UDP-N-acetyl-3-O-(1-carboxyvinyl)-alpha-D-glucosamine + phosphate. It functions in the pathway cell wall biogenesis; peptidoglycan biosynthesis. Functionally, cell wall formation. Adds enolpyruvyl to UDP-N-acetylglucosamine. The sequence is that of UDP-N-acetylglucosamine 1-carboxyvinyltransferase 1 from Mesorhizobium japonicum (strain LMG 29417 / CECT 9101 / MAFF 303099) (Mesorhizobium loti (strain MAFF 303099)).